The following is an 863-amino-acid chain: Protein translocase subunit SecA (863 aa).

ATP is bound by residues Q88, 106-110, and D496; that span reads GEGKT. Positions 818–842 are disordered; the sequence is EVKTEPVITKKKPARNEPCPCGSGK. Positions 836, 838, 847, and 848 each coordinate Zn(2+).

The protein belongs to the SecA family. In terms of assembly, monomer and homodimer. Part of the essential Sec protein translocation apparatus which comprises SecA, SecYEG and auxiliary proteins SecDF-YajC and YidC. Requires Zn(2+) as cofactor.

The protein resides in the cell inner membrane. The protein localises to the cytoplasm. The catalysed reaction is ATP + H2O + cellular proteinSide 1 = ADP + phosphate + cellular proteinSide 2.. In terms of biological role, part of the Sec protein translocase complex. Interacts with the SecYEG preprotein conducting channel. Has a central role in coupling the hydrolysis of ATP to the transfer of proteins into and across the cell membrane, serving as an ATP-driven molecular motor driving the stepwise translocation of polypeptide chains across the membrane. In Nitratiruptor sp. (strain SB155-2), this protein is Protein translocase subunit SecA.